Reading from the N-terminus, the 223-residue chain is Ubiquitin carboxyl-terminal hydrolase isozyme L1 (223 aa).

Residue methionine 1 is modified to N-acetylmethionine. The UCH catalytic domain occupies 2-221 (QLKPMEINPE…VRFSAVALCK (220 aa)). Residues 5 to 10 (PMEINP) form an interaction with ubiquitin region. Cysteine 90 serves as the catalytic Nucleophile. Serine 125 bears the Phosphoserine mark. The Proton donor role is filled by histidine 161. The tract at residues 211 to 216 (EVRFSA) is interaction with ubiquitin. Cysteine 220 carries the S-farnesyl cysteine lipid modification. Residues 221–223 (KAA) constitute a propeptide, removed in mature form.

Belongs to the peptidase C12 family. Monomer. Homodimer. Interacts with COPS5 and SNCA. O-glycosylated. As to expression, expressed in brain, where it is found in neurons but not in oligodendrocytes or astrocytes. Found in the ganglion cell layer and the inner nuclear layer of the retina (at protein level). Expressed in brain and testis. In the brain, expression is at its lowest in replaceable neurons of hippocampus and olfactory bulb. Highly expressed in senescent pituitary. In skeletal muscle, primarily expressed in oxidative muscle fibers.

It localises to the cytoplasm. The protein localises to the endoplasmic reticulum membrane. The enzyme catalyses Thiol-dependent hydrolysis of ester, thioester, amide, peptide and isopeptide bonds formed by the C-terminal Gly of ubiquitin (a 76-residue protein attached to proteins as an intracellular targeting signal).. Deubiquitinase that plays a role in the regulation of several processes such as maintenance of synaptic function, cardiac function, inflammatory response or osteoclastogenesis. Abrogates the ubiquitination of multiple proteins including WWTR1/TAZ, EGFR, HIF1A and beta-site amyloid precursor protein cleaving enzyme 1/BACE1. In addition, recognizes and hydrolyzes a peptide bond at the C-terminal glycine of ubiquitin to maintain a stable pool of monoubiquitin that is a key requirement for the ubiquitin-proteasome and the autophagy-lysosome pathways. Regulates amyloid precursor protein/APP processing by promoting BACE1 degradation resulting in decreased amyloid beta production. Plays a role in the immune response by regulating the ability of MHC I molecules to reach cross-presentation compartments competent for generating Ag-MHC I complexes. Mediates the 'Lys-48'-linked deubiquitination of the transcriptional coactivator WWTR1/TAZ leading to its stabilization and inhibition of osteoclastogenesis. Deubiquitinates and stabilizes epidermal growth factor receptor EGFR to prevent its degradation and to activate its downstream mediators. Modulates oxidative activity in skeletal muscle by regulating key mitochondrial oxidative proteins. Enhances the activity of hypoxia-inducible factor 1-alpha/HIF1A by abrogateing its VHL E3 ligase-mediated ubiquitination and consequently inhibiting its degradation. This Mus musculus (Mouse) protein is Ubiquitin carboxyl-terminal hydrolase isozyme L1 (Uchl1).